The chain runs to 361 residues: Histidinol-phosphate aminotransferase (361 aa).

Lysine 224 is subject to N6-(pyridoxal phosphate)lysine.

This sequence belongs to the class-II pyridoxal-phosphate-dependent aminotransferase family. Histidinol-phosphate aminotransferase subfamily. In terms of assembly, homodimer. It depends on pyridoxal 5'-phosphate as a cofactor.

It carries out the reaction L-histidinol phosphate + 2-oxoglutarate = 3-(imidazol-4-yl)-2-oxopropyl phosphate + L-glutamate. Its pathway is amino-acid biosynthesis; L-histidine biosynthesis; L-histidine from 5-phospho-alpha-D-ribose 1-diphosphate: step 7/9. This is Histidinol-phosphate aminotransferase from Limosilactobacillus fermentum (strain NBRC 3956 / LMG 18251) (Lactobacillus fermentum).